A 143-amino-acid chain; its full sequence is Large ribosomal subunit protein uL15 (143 aa).

The interval 1–52 is disordered; that stretch reads MKLNTLAPAAGSKSAPKRLGRGIGSGLGKTSGKGHKGQKARSGGYHKVGFEG. Gly residues predominate over residues 21 to 31; the sequence is RGIGSGLGKTS.

This sequence belongs to the universal ribosomal protein uL15 family. Part of the 50S ribosomal subunit.

In terms of biological role, binds to the 23S rRNA. The sequence is that of Large ribosomal subunit protein uL15 from Francisella tularensis subsp. tularensis (strain FSC 198).